Here is a 189-residue protein sequence, read N- to C-terminus: GTPase KRas (189 aa).

N-acetylmethionine; in GTPase KRas; alternate is present on Met-1. Thr-2 bears the N-acetylthreonine; in GTPase KRas, N-terminally processed mark. Residues 10–18, 29–35, and 59–60 each bind GTP; these read GAGGVGKSA, VDEYDPT, and AG. An Effector region motif is present at residues 32 to 40; the sequence is YDPTIEDSY. (Microbial infection) O-linked (Glc) threonine; by P.sordellii toxin TcsL glycosylation occurs at Thr-35. N6-acetyllysine is present on Lys-104. Position 116 to 119 (116 to 119) interacts with GTP; it reads NKCD. The interval 166–185 is hypervariable region; sequence YRLKKISKEEKTPGCVKIKK. Residue Lys-170 forms a Glycyl lysine isopeptide (Lys-Gly) (interchain with G-Cter in ubiquitin) linkage. A lipid anchor (S-palmitoyl cysteine) is attached at Cys-180. N6-palmitoyl lysine attachment occurs at residues Lys-182, Lys-184, and Lys-185. The residue at position 186 (Cys-186) is a Cysteine methyl ester. The S-farnesyl cysteine moiety is linked to residue Cys-186. Positions 187-189 are cleaved as a propeptide — removed in mature form; it reads IIM.

The protein belongs to the small GTPase superfamily. Ras family. In terms of assembly, interacts with PHLPP. Interacts (active GTP-bound form preferentially) with RGS14. Interacts (when farnesylated) with PDE6D; this promotes dissociation from the cell membrane. Interacts with SOS1. Interacts (when farnesylated) with GPR31. Interacts with RAP1GDS1. Interacts (active GTP-bound form) with both SHOC2 and PP1c (all isoforms) to form a tertiary complex; SHOC2 and PP1c preferably bind M-Ras/MRAS, but they also bind K-Ras/KRAS, N-Ras/NRAS and H-Ras/HRAS. Interacts (GTP-bound form) with MAPKAP1/SIN1; inhibiting K-Ras/KRAS activity. Interacts with GPR31; in a farnelysation-dependent manner. Acetylation at Lys-104 prevents interaction with guanine nucleotide exchange factors (GEFs). In terms of processing, palmitoylated at Lys-182, Lys-184 and Lys-185. Palmitoylation on lysine residues is promoted by palmitoylation at Cys-180. Lysine-depalmitoylation by SIRT2 promotes its localization to endomembranes in endocytic pathways. Post-translationally, ubiquitinated by the BCR(LZTR1) E3 ubiquitin ligase complex at Lys-170 in a non-degradative manner, leading to inhibit Ras signaling by decreasing Ras association with membranes. (Microbial infection) Glucosylated at Thr-35 by P.sordellii toxin TcsL.

It is found in the cell membrane. It localises to the endomembrane system. The protein resides in the cytoplasm. The protein localises to the cytosol. The enzyme catalyses GTP + H2O = GDP + phosphate + H(+). With respect to regulation, alternates between an inactive form bound to GDP and an active form bound to GTP. Activated by a guanine nucleotide-exchange factor (GEF) and inactivated by a GTPase-activating protein (GAP). Interaction with SOS1 promotes exchange of bound GDP to GTP. Functionally, ras proteins bind GDP/GTP and possess intrinsic GTPase activity. Plays an important role in the regulation of cell proliferation. Plays a role in promoting oncogenic events by inducing transcriptional silencing of tumor suppressor genes (TSGs) in colorectal cancer (CRC) cells in a ZNF304-dependent manner. This is GTPase KRas (KRAS) from Homo sapiens (Human).